The chain runs to 165 residues: Xanthine-guanine phosphoribosyltransferase (165 aa).

5-phospho-alpha-D-ribose 1-diphosphate-binding positions include 41–42 and 98–106; these read RG and DDLTDTGKT. Asp99 provides a ligand contact to Mg(2+). Guanine-binding residues include Asp102 and Ile145. 2 residues coordinate xanthine: Asp102 and Ile145. GMP contacts are provided by residues 102-106 and 144-145; these read DTGKT and WI.

Belongs to the purine/pyrimidine phosphoribosyltransferase family. XGPT subfamily. As to quaternary structure, homotetramer. Requires Mg(2+) as cofactor.

The protein resides in the cell inner membrane. It carries out the reaction GMP + diphosphate = guanine + 5-phospho-alpha-D-ribose 1-diphosphate. It catalyses the reaction XMP + diphosphate = xanthine + 5-phospho-alpha-D-ribose 1-diphosphate. The catalysed reaction is IMP + diphosphate = hypoxanthine + 5-phospho-alpha-D-ribose 1-diphosphate. It functions in the pathway purine metabolism; GMP biosynthesis via salvage pathway; GMP from guanine: step 1/1. The protein operates within purine metabolism; XMP biosynthesis via salvage pathway; XMP from xanthine: step 1/1. In terms of biological role, purine salvage pathway enzyme that catalyzes the transfer of the ribosyl-5-phosphate group from 5-phospho-alpha-D-ribose 1-diphosphate (PRPP) to the N9 position of the 6-oxopurines guanine and xanthine to form the corresponding ribonucleotides GMP (guanosine 5'-monophosphate) and XMP (xanthosine 5'-monophosphate), with the release of PPi. To a lesser extent, also acts on hypoxanthine. The chain is Xanthine-guanine phosphoribosyltransferase from Agrobacterium fabrum (strain C58 / ATCC 33970) (Agrobacterium tumefaciens (strain C58)).